Consider the following 725-residue polypeptide: Nitrogen regulatory protein areA (725 aa).

Disordered regions lie at residues 1–90, 429–464, and 479–524; these read MRLS…RTNS, NQGG…PRTA, and GSAS…PEPA. Residues 39–48 show a composition bias toward basic and acidic residues; that stretch reads PAEHSAHPSV. Polar residues-rich tracts occupy residues 442 to 452 and 479 to 500; these read ASVSEVRNQNQ and GSAS…SGLS. The GATA-type zinc finger occupies 525–549; that stretch reads CTNCFTQTTPLWRRNPEGQPLCNAC. A disordered region spans residues 574–714; it reads RSSANTLTVG…NHSIAGGQGA (141 aa). Polar residues-rich tracts occupy residues 575–584 and 597–624; these read SSANTLTVGT and IQHA…SSTL. 2 stretches are compositionally biased toward low complexity: residues 631 to 656 and 678 to 704; these read PIAA…QVAP and KSAA…ANPA.

It localises to the nucleus. In terms of biological role, major nitrogen regulatory protein. The chain is Nitrogen regulatory protein areA (AREA) from Penicillium chrysogenum (Penicillium notatum).